The chain runs to 199 residues: ParB-like protein Saci_1498 (199 aa).

It belongs to the ParB family.

Its function is as follows. Probably part of a 4-gene DNA damage response locus in which the upstream ups system, in combination with this downstream locus, functions in homologous recombination to rescue Sulfolobales from DNA-damaging threats. This protein might function in the DNA transfer machinery. The protein is ParB-like protein Saci_1498 of Sulfolobus acidocaldarius (strain ATCC 33909 / DSM 639 / JCM 8929 / NBRC 15157 / NCIMB 11770).